We begin with the raw amino-acid sequence, 87 residues long: Putative membrane protein insertion efficiency factor (87 aa).

This sequence belongs to the UPF0161 family.

The protein resides in the cell membrane. In terms of biological role, could be involved in insertion of integral membrane proteins into the membrane. The polypeptide is Putative membrane protein insertion efficiency factor (Ligilactobacillus salivarius (strain UCC118) (Lactobacillus salivarius)).